Consider the following 296-residue polypeptide: Acetylglutamate kinase (296 aa).

Residues G67–G68, R89, and N194 contribute to the substrate site.

The protein belongs to the acetylglutamate kinase family. ArgB subfamily.

It is found in the cytoplasm. It catalyses the reaction N-acetyl-L-glutamate + ATP = N-acetyl-L-glutamyl 5-phosphate + ADP. It functions in the pathway amino-acid biosynthesis; L-arginine biosynthesis; N(2)-acetyl-L-ornithine from L-glutamate: step 2/4. Its function is as follows. Catalyzes the ATP-dependent phosphorylation of N-acetyl-L-glutamate. The polypeptide is Acetylglutamate kinase (Syntrophus aciditrophicus (strain SB)).